A 347-amino-acid polypeptide reads, in one-letter code: D-alanine--D-alanine ligase (347 aa).

The region spanning 131–333 (KRVLESAGIA…YPKLIERLVD (203 aa)) is the ATP-grasp domain. 161-216 (EEKLAYPVFTKPSNMGSSVGISKSENQEELRQALKLAFRYDSRVLVEQGVNAREIE) provides a ligand contact to ATP. Asp-287, Glu-300, and Asn-302 together coordinate Mg(2+).

This sequence belongs to the D-alanine--D-alanine ligase family. The cofactor is Mg(2+). Mn(2+) is required as a cofactor.

It localises to the cytoplasm. It catalyses the reaction 2 D-alanine + ATP = D-alanyl-D-alanine + ADP + phosphate + H(+). It functions in the pathway cell wall biogenesis; peptidoglycan biosynthesis. Cell wall formation. In Streptococcus pneumoniae serotype 4 (strain ATCC BAA-334 / TIGR4), this protein is D-alanine--D-alanine ligase.